The sequence spans 434 residues: Xylose isomerase (434 aa).

Residues His-99 and Asp-102 contribute to the active site. The Mg(2+) site is built by Glu-230, Glu-266, His-269, Asp-294, Asp-305, Asp-307, and Asp-337.

This sequence belongs to the xylose isomerase family. As to quaternary structure, homotetramer. Mg(2+) serves as cofactor.

It localises to the cytoplasm. It carries out the reaction alpha-D-xylose = alpha-D-xylulofuranose. The polypeptide is Xylose isomerase (Dinoroseobacter shibae (strain DSM 16493 / NCIMB 14021 / DFL 12)).